A 104-amino-acid chain; its full sequence is Ig lambda-2 chain C region (104 aa).

The Ig-like domain occupies 6–99 (PTLTVFPPST…EGNTVEKSLS (94 aa)). Cys-27 and Cys-85 are disulfide-bonded.

This chain is Ig lambda-2 chain C region, found in Rattus norvegicus (Rat).